The following is a 289-amino-acid chain: Probable acetolactate synthase small subunit (289 aa).

Position 34 is a phosphoserine (S34). An ACT domain is found at V72–M149.

This sequence belongs to the acetolactate synthase small subunit family.

The protein localises to the cytoplasm. The protein operates within amino-acid biosynthesis; L-isoleucine biosynthesis; L-isoleucine from 2-oxobutanoate: step 1/4. It participates in amino-acid biosynthesis; L-valine biosynthesis; L-valine from pyruvate: step 1/4. Functionally, stimulates activity of the acetolactate synthase catalytic subunit ilv1. This chain is Probable acetolactate synthase small subunit, found in Schizosaccharomyces pombe (strain 972 / ATCC 24843) (Fission yeast).